The primary structure comprises 253 residues: Succinate dehydrogenase iron-sulfur subunit (253 aa).

3 residues coordinate [2Fe-2S] cluster: C64, C69, and C84. The region spanning 146-174 (RQWAYELSKCMTCGVCLEACPNVNSKSKF) is the 4Fe-4S ferredoxin-type domain. 3 residues coordinate [4Fe-4S] cluster: C155, C158, and C161. Residues C165, C212, and C218 each contribute to the [3Fe-4S] cluster site. Residue C222 participates in [4Fe-4S] cluster binding.

This sequence belongs to the succinate dehydrogenase/fumarate reductase iron-sulfur protein family. In B.subtilis succinate dehydrogenase forms part of an enzyme complex containing three subunits: a flavoprotein, an iron-sulfur protein and cytochrome b-558. The cofactor is [2Fe-2S] cluster. Requires [3Fe-4S] cluster as cofactor. [4Fe-4S] cluster serves as cofactor.

It catalyses the reaction a quinone + succinate = fumarate + a quinol. The protein operates within carbohydrate metabolism; tricarboxylic acid cycle; fumarate from succinate (bacterial route): step 1/1. The sequence is that of Succinate dehydrogenase iron-sulfur subunit (sdhB) from Bacillus subtilis (strain 168).